The chain runs to 398 residues: E3 ubiquitin-protein ligase RSL1 (398 aa).

Residues 155-374 (QKETCNICLN…LDLTQCCGSC (220 aa)) are TRIAD supradomain. Residues C159, C162, C183, C186, C246, C251, C271, C274, C279, C282, H287, C292, C321, and C324 each coordinate Zn(2+). Residues 159-207 (CNICLNDDINADQMFSVDKSGHMCCSECVKRHIEVRLLEGSLITCPHYR) form an RING-type 3; degenerate zinc finger. Residues 159–208 (CNICLNDDINADQMFSVDKSGHMCCSECVKRHIEVRLLEGSLITCPHYRC) form an RING-type 1 zinc finger. The IBR-type zinc finger occupies 233 to 292 (TKDELIPVMDRVYCPNPRCSTLMSETELSGLNIGVRRCCVKCGEPFCVKCKVSWHNNLSC). The segment at 321–349 (CSKCKHMIELSSGCISVVCRCGHTFCYQC) adopts an RING-type 2; atypical zinc-finger fold. The segment at 321–356 (CSKCKHMIELSSGCISVVCRCGHTFCYQCGADAGDC) adopts an RING-type 4; degenerate zinc-finger fold. The active site involves C334. Zn(2+)-binding residues include C339, C341, C346, C349, H358, and C370. Residues 374–394 (CCCFVFFLVIIAIVVTIILLV) traverse the membrane as a helical segment.

It belongs to the RBR family. In terms of assembly, interacts with the PYL4 and PYR1 ABA receptors at the plasma membrane. Zn(2+) serves as cofactor.

Its subcellular location is the cell membrane. It is found in the vacuole membrane. It catalyses the reaction [E2 ubiquitin-conjugating enzyme]-S-ubiquitinyl-L-cysteine + [acceptor protein]-L-lysine = [E2 ubiquitin-conjugating enzyme]-L-cysteine + [acceptor protein]-N(6)-ubiquitinyl-L-lysine.. The protein operates within protein modification; protein ubiquitination. In terms of biological role, acts as an E3 ubiquitin-protein ligase, or as part of E3 complex, which accepts ubiquitin from specific E2 ubiquitin-conjugating enzymes and then transfers it to substrates. Negative regulator of the abscisic acid (ABA) signaling pathway which targets PYL4 and PYR1 ABA receptors in plasma membrane to promote their FREE1/FYVE1-dependent trafficking and degradation upon ubiquitynation; this process involves clathrin-mediated endocytosis and trafficking through the ESCRT pathway. Involved in the maintenance of seed longevity. May enhance gibberellins responses. The sequence is that of E3 ubiquitin-protein ligase RSL1 from Arabidopsis thaliana (Mouse-ear cress).